The chain runs to 451 residues: UPF0210 protein LMOf2365_0563 (451 aa).

It belongs to the UPF0210 family. Homodimer.

The protein is UPF0210 protein LMOf2365_0563 of Listeria monocytogenes serotype 4b (strain F2365).